A 329-amino-acid chain; its full sequence is MTAGPTPGAVDAPSLHIPVLRDEVVDALAPRDGAVLVDGTFGAGGYTAALLASAACTVWAIDRDPAAVARGHALAARHPGRLTVLDGTFGCMESLLAAHGITRVDGIALDIGVSSPQIDDPSRGFSFRFDGPLDMRMGSHGTTAADIVNERDEAEIADIVWRYGEERHSRRVARAIVARRREAPITRTLDLAEIVRSVVPKSKDGIDPATRTFQALRIAVNDELGELERGLAAAERLLAPGGRLAVVTFHSLEDRVVKEFLRSRSAAAPAPSRHLPAPADAPAPTFRLIARSGVTPAPAELAANPRARSARLRSAERTSAPARRLGDAA.

S-adenosyl-L-methionine is bound by residues 44–46 (GGY), Asp-62, Asp-110, and Gln-117. Residues 297–329 (APAELAANPRARSARLRSAERTSAPARRLGDAA) form a disordered region.

It belongs to the methyltransferase superfamily. RsmH family.

The protein resides in the cytoplasm. It carries out the reaction cytidine(1402) in 16S rRNA + S-adenosyl-L-methionine = N(4)-methylcytidine(1402) in 16S rRNA + S-adenosyl-L-homocysteine + H(+). In terms of biological role, specifically methylates the N4 position of cytidine in position 1402 (C1402) of 16S rRNA. This is Ribosomal RNA small subunit methyltransferase H from Rhodospirillum centenum (strain ATCC 51521 / SW).